Reading from the N-terminus, the 384-residue chain is Urea transporter 1 (384 aa).

The interval 1–23 is disordered; sequence MDDNPTAVKLDQGGNQAPQGQGR. A run of 5 helical transmembrane segments spans residues 61-81, 85-105, 111-131, 138-158, and 168-188; these read ISQV…VGLL, PWCA…ALLL, AITA…MAIY, FWWL…FSSA, and LPVF…ATGH. An N-linked (GlcNAc...) asparagine glycan is attached at Asn206. Helical transmembrane passes span 237 to 257, 279 to 299, and 327 to 347; these read GGIF…HAAI, GLWG…FMAL, and VVGL…FLLL.

It belongs to the urea transporter family. Homotrimer; each subunit contains a pore through which urea permeates. Identified in a complex with STOM.

The protein localises to the cell membrane. It localises to the basolateral cell membrane. It carries out the reaction urea(in) = urea(out). Mediates the transport of urea driven by a concentration gradient across the cell membranes of erythrocytes and the renal inner medullary collecting duct which is critical to the urinary concentrating mechanism. Facilitates water transport in erythrocytes. This Capra hircus (Goat) protein is Urea transporter 1 (SLC14A1).